Reading from the N-terminus, the 239-residue chain is Uridylate kinase (239 aa).

An ATP-binding site is contributed by 10 to 13 (KISG). Residues 18–23 (GESGYG) form an involved in allosteric activation by GTP region. G52 is a binding site for UMP. ATP-binding residues include G53 and R57. UMP contacts are provided by residues D72 and 133 to 140 (TGNPYFTT). ATP is bound by residues T160, Y166, and D169.

The protein belongs to the UMP kinase family. In terms of assembly, homohexamer.

Its subcellular location is the cytoplasm. The enzyme catalyses UMP + ATP = UDP + ADP. It functions in the pathway pyrimidine metabolism; CTP biosynthesis via de novo pathway; UDP from UMP (UMPK route): step 1/1. Its activity is regulated as follows. Allosterically activated by GTP. Inhibited by UTP. In terms of biological role, catalyzes the reversible phosphorylation of UMP to UDP. The chain is Uridylate kinase from Chlorobaculum tepidum (strain ATCC 49652 / DSM 12025 / NBRC 103806 / TLS) (Chlorobium tepidum).